A 332-amino-acid chain; its full sequence is Invasin IpaD (332 aa).

The segment covering 1-25 (MNITTLTNSISTSSFSPNNTNGSST) has biased composition (low complexity). The interval 1–43 (MNITTLTNSISTSSFSPNNTNGSSTETVNSDIKTTTSSHPVSS) is disordered. The span at 26–43 (ETVNSDIKTTTSSHPVSS) shows a compositional bias: polar residues. Residues 44-77 (LTMLNDTLHNIRTTNQALKKELSQKTLTKTSLEE) adopt a coiled-coil conformation. Residues 192–267 (VNSLKKALEE…KSLDNLGGNG (76 aa)) form an ipaB binding region.

It belongs to the invasin protein D family.

It is found in the secreted. Its function is as follows. Required for bacterial invasion of host cells. Controls IpaB and IpaC secretion, and the efficiency with which they are physically inserted into target cell membranes. These proteins are exported via T3SS to form a pore in the host membrane that allows the translocation of the other effectors into the host cytoplasm. Along with IpaB, is essential for both blocking secretion through the Mxi/Spa translocon in the absence of a secretion-inducing signal, and for controlling the level of secretion in the presence of this signal. This Shigella flexneri protein is Invasin IpaD (ipaD).